We begin with the raw amino-acid sequence, 185 residues long: Lactoylglutathione lyase (185 aa).

Residues methionine 1–glutamate 21 are disordered. A VOC domain is found at isoleucine 27–arginine 174. Substrate is bound by residues glutamine 30 and arginine 34. Glutamine 30 lines the Zn(2+) pocket. Zn(2+) is bound at residue glutamate 96. Substrate-binding positions include asparagine 100, arginine 120, histidine 124, and lysine 154–methionine 155. Residue histidine 124 participates in Zn(2+) binding. A Zn(2+)-binding site is contributed by glutamate 170. Glutamate 170 acts as the Proton donor/acceptor in catalysis.

It belongs to the glyoxalase I family. As to quaternary structure, homodimer. The cofactor is Zn(2+).

The enzyme catalyses (R)-S-lactoylglutathione = methylglyoxal + glutathione. The protein operates within secondary metabolite metabolism; methylglyoxal degradation; (R)-lactate from methylglyoxal: step 1/2. Functionally, catalyzes the conversion of hemimercaptal, formed from methylglyoxal and glutathione, to S-lactoylglutathione. Active toward the hemithioacetal adducts formed by reacting methylglyoxal or phenylglyoxal with glutathione, homoglutathione or gamma-glutamylcysteine, showing no preference for homoglutathione adducts over glutathione adducts. The sequence is that of Lactoylglutathione lyase (GLXI) from Glycine max (Soybean).